Consider the following 273-residue polypeptide: Putative phosphoenolpyruvate synthase regulatory protein (273 aa).

Residue 153-160 (AVSRAGKT) coordinates ADP.

Belongs to the pyruvate, phosphate/water dikinase regulatory protein family. PSRP subfamily.

It catalyses the reaction [pyruvate, water dikinase] + ADP = [pyruvate, water dikinase]-phosphate + AMP + H(+). The catalysed reaction is [pyruvate, water dikinase]-phosphate + phosphate + H(+) = [pyruvate, water dikinase] + diphosphate. In terms of biological role, bifunctional serine/threonine kinase and phosphorylase involved in the regulation of the phosphoenolpyruvate synthase (PEPS) by catalyzing its phosphorylation/dephosphorylation. The sequence is that of Putative phosphoenolpyruvate synthase regulatory protein from Xanthomonas oryzae pv. oryzae (strain MAFF 311018).